Reading from the N-terminus, the 102-residue chain is Cytochrome b (102 aa).

The next 3 helical transmembrane spans lie at 1 to 21, 45 to 66, and 81 to 101; these read FGSL…FLAM, WLMR…FLHI, and WNIG…GYVL. Heme b-binding residues include H51 and H65.

The protein belongs to the cytochrome b family. As to quaternary structure, the cytochrome bc1 complex contains 3 respiratory subunits (MT-CYB, CYC1 and UQCRFS1), 2 core proteins (UQCRC1 and UQCRC2) and probably 6 low-molecular weight proteins. Requires heme b as cofactor.

The protein localises to the mitochondrion inner membrane. Functionally, component of the ubiquinol-cytochrome c reductase complex (complex III or cytochrome b-c1 complex) that is part of the mitochondrial respiratory chain. The b-c1 complex mediates electron transfer from ubiquinol to cytochrome c. Contributes to the generation of a proton gradient across the mitochondrial membrane that is then used for ATP synthesis. This is Cytochrome b (mt-cyb) from Ambystoma tigrinum (Eastern tiger salamander).